We begin with the raw amino-acid sequence, 152 residues long: Arginine repressor (152 aa).

Belongs to the ArgR family.

The protein resides in the cytoplasm. The protein operates within amino-acid biosynthesis; L-arginine biosynthesis [regulation]. In terms of biological role, regulates arginine biosynthesis genes. The polypeptide is Arginine repressor (Lactococcus lactis subsp. cremoris (strain MG1363)).